A 111-amino-acid polypeptide reads, in one-letter code: Universal stress protein B (111 aa).

Helical transmembrane passes span 1–21 (MISTVALFWALFLVCVINMAR) and 90–110 (FILTSALCGLVIISLIGLMIW).

This sequence belongs to the universal stress protein B family.

Its subcellular location is the cell inner membrane. This chain is Universal stress protein B, found in Cronobacter sakazakii (strain ATCC BAA-894) (Enterobacter sakazakii).